Consider the following 553-residue polypeptide: Hydroxylamine reductase (553 aa).

Residues Cys-3, Cys-6, Cys-18, and Cys-25 each coordinate [2Fe-2S] cluster. Hybrid [4Fe-2O-2S] cluster contacts are provided by His-252, Glu-276, Cys-320, Cys-408, Cys-436, Cys-461, Glu-495, and Lys-497. Cysteine persulfide is present on Cys-408.

It belongs to the HCP family. The cofactor is [2Fe-2S] cluster. Hybrid [4Fe-2O-2S] cluster serves as cofactor.

The protein localises to the cytoplasm. The catalysed reaction is A + NH4(+) + H2O = hydroxylamine + AH2 + H(+). Its function is as follows. Catalyzes the reduction of hydroxylamine to form NH(3) and H(2)O. The chain is Hydroxylamine reductase from Vibrio vulnificus (strain YJ016).